Consider the following 199-residue polypeptide: MSARAPKELRLALPPCLLNRTFASHNASGGSSAGLRSSGAGGGTCITQVGQQLFQSFSSTLVLIVLVTLIFCLLVLSLSTFHIHKRRMKKRKMQRAQEEYERDHCSGSHGGGGLPRAGVQAPTHGKETRLERQPRDSAFCTPSNATSSSSSSSSSPGLLCQGPCAPPPPLPAPTPQGAPAASSCLDTPGEGLLQTVVLS.

Positions 1–23 (MSARAPKELRLALPPCLLNRTFA) are cleaved as a signal peptide. Residues asparagine 19 and asparagine 26 are each glycosylated (N-linked (GlcNAc...) asparagine). Residues 24-60 (SHNASGGSSAGLRSSGAGGGTCITQVGQQLFQSFSST) lie on the Extracellular side of the membrane. The helical transmembrane segment at 61 to 81 (LVLIVLVTLIFCLLVLSLSTF) threads the bilayer. Over 82-199 (HIHKRRMKKR…EGLLQTVVLS (118 aa)) the chain is Cytoplasmic. The disordered stretch occupies residues 93-190 (MQRAQEEYER…ASSCLDTPGE (98 aa)). Basic and acidic residues-rich tracts occupy residues 95–106 (RAQEEYERDHCS) and 124–135 (HGKETRLERQPR). Positions 147 to 163 (SSSSSSSSSPGLLCQGP) are enriched in low complexity. Over residues 164–176 (CAPPPPLPAPTPQ) the composition is skewed to pro residues.

It is found in the membrane. This is an uncharacterized protein from Mus musculus (Mouse).